Consider the following 123-residue polypeptide: Anti-lipopolysaccharide factor (123 aa).

Residues 1–26 (MRTRVMAGLCVALVVMCLYMPQPCEA) form the signal peptide. Cysteine 55 and cysteine 76 are joined by a disulfide.

Strong expression in hemocytes, heart and muscle, with weaker expression detected in gills and hepatopancreas. No expression detected in eyes.

It localises to the secreted. Its function is as follows. Binds to bacterial LPS and may specifically inhibit the LPS-mediated activation of the hemolymph coagulation. It has a strong antibacterial effect especially on the growth of Gram-negative bacteria. In Scylla serrata (Mud crab), this protein is Anti-lipopolysaccharide factor.